The following is a 185-amino-acid chain: ATP-dependent protease subunit HslV (185 aa).

Thr-14 is a catalytic residue. Residues Ala-168, Cys-171, and Thr-174 each coordinate Na(+).

The protein belongs to the peptidase T1B family. HslV subfamily. In terms of assembly, a double ring-shaped homohexamer of HslV is capped on each side by a ring-shaped HslU homohexamer. The assembly of the HslU/HslV complex is dependent on binding of ATP.

Its subcellular location is the cytoplasm. It catalyses the reaction ATP-dependent cleavage of peptide bonds with broad specificity.. With respect to regulation, allosterically activated by HslU binding. Its function is as follows. Protease subunit of a proteasome-like degradation complex believed to be a general protein degrading machinery. The protein is ATP-dependent protease subunit HslV of Hyphomonas neptunium (strain ATCC 15444).